A 292-amino-acid chain; its full sequence is MQAEIGIIGGSGLYSMPGVSDVQEVRVTTPFGEPSDPYVLGTLAGRKVAFLARHGRGHRLLPTELNFRANIHGFKQLGVERIISVSAVGSLKEEHRPLEFVIPDQFYDRTKQRVSTFFGEGIVAHVGFGDPVCGEMAKVVKHATDKAGVVAKAGGTYVCMEGPQFSTKAESNLYRSWGFDVIGMTNLQEAKLAREAELCYVTVAMVTDYDCWHPDHDAVTVDQIVAVLLKNAENACSVVREAVAAMPKDRTCKCGSALATAIITNKDVVPAATKEKLKLIIGKYFGEQKAGA.

Phosphate-binding positions include serine 11, 53 to 54 (RH), and 86 to 87 (SA). Methionine 184 serves as a coordination point for substrate. Threonine 185 is a binding site for phosphate. 208 to 210 (DYD) contributes to the substrate binding site.

It belongs to the PNP/MTAP phosphorylase family. MTAP subfamily. In terms of assembly, homohexamer. Dimer of a homotrimer.

The catalysed reaction is S-methyl-5'-thioadenosine + phosphate = 5-(methylsulfanyl)-alpha-D-ribose 1-phosphate + adenine. It functions in the pathway amino-acid biosynthesis; L-methionine biosynthesis via salvage pathway; S-methyl-5-thio-alpha-D-ribose 1-phosphate from S-methyl-5'-thioadenosine (phosphorylase route): step 1/1. In terms of biological role, catalyzes the reversible phosphorylation of S-methyl-5'-thioadenosine (MTA) to adenine and 5-methylthioribose-1-phosphate. Involved in the breakdown of MTA, a major by-product of polyamine biosynthesis. Responsible for the first step in the methionine salvage pathway after MTA has been generated from S-adenosylmethionine. Has broad substrate specificity with 6-aminopurine nucleosides as preferred substrates. This chain is S-methyl-5'-thioadenosine phosphorylase, found in Koribacter versatilis (strain Ellin345).